Consider the following 1627-residue polypeptide: Formin-like protein 5 (1627 aa).

A Phosphatase tensin-type domain is found at 5 to 194 (RKFFLKKTPD…HYITRQGSGP (190 aa)). Cys-127 (phosphocysteine intermediate) is an active-site residue. The 138-residue stretch at 200–337 (SRPLILDSIV…FRAEVVFSDP (138 aa)) folds into the C2 tensin-type domain. Disordered stretches follow at residues 370–413 (EAEE…LEKH), 680–787 (TKRE…YDSS), 801–1181 (KFNV…RGVV), 1241–1261 (AAVP…SLGS), and 1571–1627 (KQAE…KDVG). Composition is skewed to basic and acidic residues over residues 402 to 413 (VSREDSGSLEKH), 681 to 691 (KREESGGRRDV), 700 to 717 (IEAR…RQIP), and 726 to 742 (MPVD…EKLG). 6 stretches are compositionally biased toward pro residues: residues 824–835 (APPPPPPPPPPY), 852–870 (QPPP…PPPA), 877–886 (IPPPPPPPPL), 897–908 (VPPPPPPPPPPR), 931–965 (ISPP…PPSA), and 974–1168 (APPP…PPGG). Residues 1188 to 1588 (FGAAAARKST…RAEKEAEAEK (401 aa)) form the FH2 domain. Basic and acidic residues-rich tracts occupy residues 1248–1261 (DSSK…SLGS) and 1571–1590 (KQAE…EKSK). Positions 1600–1611 (KPSNPSRQVKQT) are enriched in polar residues. Residues 1612 to 1627 (PDTKTRAASRRGKDVG) are compositionally biased toward basic and acidic residues.

This sequence belongs to the formin-like family. Class-II subfamily.

This chain is Formin-like protein 5 (FH5), found in Oryza sativa subsp. japonica (Rice).